Here is a 47-residue protein sequence, read N- to C-terminus: Large ribosomal subunit protein bL34 (47 aa).

It belongs to the bacterial ribosomal protein bL34 family.

The sequence is that of Large ribosomal subunit protein bL34 from Mycobacterium tuberculosis (strain ATCC 25177 / H37Ra).